The sequence spans 321 residues: MATH domain and coiled-coil domain-containing protein At3g58260 (321 aa).

The MATH domain occupies 6–135 (NNTFTWVIKN…NDEVMVAVAV (130 aa)). Residues 232–283 (KLDWLEKKLDELFEKKKEEADKIRMQNIEEELKDLRQKCSSLEALLKKEKTG) adopt a coiled-coil conformation.

The protein is MATH domain and coiled-coil domain-containing protein At3g58260 of Arabidopsis thaliana (Mouse-ear cress).